A 122-amino-acid chain; its full sequence is Large ribosomal subunit protein bL12 (122 aa).

The protein belongs to the bacterial ribosomal protein bL12 family. As to quaternary structure, homodimer. Part of the ribosomal stalk of the 50S ribosomal subunit. Forms a multimeric L10(L12)X complex, where L10 forms an elongated spine to which 2 to 4 L12 dimers bind in a sequential fashion. Binds GTP-bound translation factors.

Forms part of the ribosomal stalk which helps the ribosome interact with GTP-bound translation factors. Is thus essential for accurate translation. The protein is Large ribosomal subunit protein bL12 of Stutzerimonas stutzeri (strain A1501) (Pseudomonas stutzeri).